A 224-amino-acid polypeptide reads, in one-letter code: Probable proteasome subunit beta type-4 (224 aa).

The protein belongs to the peptidase T1B family. The 26S proteasome consists of a 20S proteasome core and two 19S regulatory subunits. The 20S proteasome core is composed of 28 subunits that are arranged in four stacked rings, resulting in a barrel-shaped structure. The two end rings are each formed by seven alpha subunits, and the two central rings are each formed by seven beta subunits. The catalytic chamber with the active sites is on the inside of the barrel.

It localises to the cytoplasm. The protein localises to the nucleus. Functionally, non-catalytic component of the proteasome, a multicatalytic proteinase complex which is characterized by its ability to cleave peptides with Arg, Phe, Tyr, Leu, and Glu adjacent to the leaving group at neutral or slightly basic pH. The proteasome has an ATP-dependent proteolytic activity. This is Probable proteasome subunit beta type-4 (CPR1) from Cryptococcus neoformans var. neoformans serotype D (strain B-3501A) (Filobasidiella neoformans).